The chain runs to 245 residues: Ribonuclease 3 (245 aa).

An RNase III domain is found at F19 to G148. Residue E61 coordinates Mg(2+). The active site involves D65. Positions 134 and 137 each coordinate Mg(2+). Residue E137 is part of the active site. The region spanning D174–E243 is the DRBM domain.

It belongs to the ribonuclease III family. As to quaternary structure, homodimer. It depends on Mg(2+) as a cofactor.

It is found in the cytoplasm. The catalysed reaction is Endonucleolytic cleavage to 5'-phosphomonoester.. In terms of biological role, digests double-stranded RNA. Involved in the processing of primary rRNA transcript to yield the immediate precursors to the large and small rRNAs (23S and 16S). Processes some mRNAs, and tRNAs when they are encoded in the rRNA operon. Processes pre-crRNA and tracrRNA of type II CRISPR loci if present in the organism. This is Ribonuclease 3 from Bacillus cereus (strain AH187).